The following is a 554-amino-acid chain: Dihydroxy-acid dehydratase (554 aa).

D78 provides a ligand contact to Mg(2+). Residue C119 participates in [2Fe-2S] cluster binding. Mg(2+)-binding residues include D120 and K121. Residue K121 is modified to N6-carboxylysine. C191 provides a ligand contact to [2Fe-2S] cluster. E442 lines the Mg(2+) pocket. S468 acts as the Proton acceptor in catalysis.

It belongs to the IlvD/Edd family. As to quaternary structure, homodimer. Requires [2Fe-2S] cluster as cofactor. It depends on Mg(2+) as a cofactor.

The enzyme catalyses (2R)-2,3-dihydroxy-3-methylbutanoate = 3-methyl-2-oxobutanoate + H2O. The catalysed reaction is (2R,3R)-2,3-dihydroxy-3-methylpentanoate = (S)-3-methyl-2-oxopentanoate + H2O. It participates in amino-acid biosynthesis; L-isoleucine biosynthesis; L-isoleucine from 2-oxobutanoate: step 3/4. The protein operates within amino-acid biosynthesis; L-valine biosynthesis; L-valine from pyruvate: step 3/4. In terms of biological role, functions in the biosynthesis of branched-chain amino acids. Catalyzes the dehydration of (2R,3R)-2,3-dihydroxy-3-methylpentanoate (2,3-dihydroxy-3-methylvalerate) into 2-oxo-3-methylpentanoate (2-oxo-3-methylvalerate) and of (2R)-2,3-dihydroxy-3-methylbutanoate (2,3-dihydroxyisovalerate) into 2-oxo-3-methylbutanoate (2-oxoisovalerate), the penultimate precursor to L-isoleucine and L-valine, respectively. This Acetivibrio thermocellus (strain ATCC 27405 / DSM 1237 / JCM 9322 / NBRC 103400 / NCIMB 10682 / NRRL B-4536 / VPI 7372) (Clostridium thermocellum) protein is Dihydroxy-acid dehydratase.